Consider the following 948-residue polypeptide: Isoleucine--tRNA ligase (948 aa).

The short motif at Pro58–His68 is the 'HIGH' region element. Glu566 contributes to the L-isoleucyl-5'-AMP binding site. The 'KMSKS' region signature appears at Lys607 to Ser611. Residue Lys610 participates in ATP binding. Positions 911, 914, 931, and 934 each coordinate Zn(2+).

Belongs to the class-I aminoacyl-tRNA synthetase family. IleS type 1 subfamily. In terms of assembly, monomer. Requires Zn(2+) as cofactor.

It localises to the cytoplasm. It catalyses the reaction tRNA(Ile) + L-isoleucine + ATP = L-isoleucyl-tRNA(Ile) + AMP + diphosphate. In terms of biological role, catalyzes the attachment of isoleucine to tRNA(Ile). As IleRS can inadvertently accommodate and process structurally similar amino acids such as valine, to avoid such errors it has two additional distinct tRNA(Ile)-dependent editing activities. One activity is designated as 'pretransfer' editing and involves the hydrolysis of activated Val-AMP. The other activity is designated 'posttransfer' editing and involves deacylation of mischarged Val-tRNA(Ile). In Vibrio vulnificus (strain CMCP6), this protein is Isoleucine--tRNA ligase.